The chain runs to 756 residues: 5-methyltetrahydropteroyltriglutamate--homocysteine methyltransferase (756 aa).

5-methyltetrahydropteroyltri-L-glutamate-binding positions include 16–19 and Lys-112; that span reads RELK. L-homocysteine is bound by residues 432 to 434 and Glu-485; that span reads IGS. L-methionine-binding positions include 432-434 and Glu-485; that span reads IGS. 5-methyltetrahydropteroyltri-L-glutamate-binding positions include 516–517 and Trp-562; that span reads RC. Residue Asp-600 coordinates L-homocysteine. Asp-600 lines the L-methionine pocket. Residue Glu-606 participates in 5-methyltetrahydropteroyltri-L-glutamate binding. Zn(2+) is bound by residues His-642, Cys-644, and Glu-666. His-695 acts as the Proton donor in catalysis. Cys-727 provides a ligand contact to Zn(2+).

This sequence belongs to the vitamin-B12 independent methionine synthase family. The cofactor is Zn(2+).

The enzyme catalyses 5-methyltetrahydropteroyltri-L-glutamate + L-homocysteine = tetrahydropteroyltri-L-glutamate + L-methionine. The protein operates within amino-acid biosynthesis; L-methionine biosynthesis via de novo pathway; L-methionine from L-homocysteine (MetE route): step 1/1. Its function is as follows. Catalyzes the transfer of a methyl group from 5-methyltetrahydrofolate to homocysteine resulting in methionine formation. The polypeptide is 5-methyltetrahydropteroyltriglutamate--homocysteine methyltransferase (Haemophilus influenzae (strain PittEE)).